The primary structure comprises 175 residues: Co-chaperone protein HscB homolog (175 aa).

In terms of domain architecture, J spans 7–79 (SHFDLFHLPA…LKRASYLLSL (73 aa)).

This sequence belongs to the HscB family. In terms of assembly, interacts with HscA and stimulates its ATPase activity.

Functionally, co-chaperone involved in the maturation of iron-sulfur cluster-containing proteins. Seems to help targeting proteins to be folded toward HscA. The protein is Co-chaperone protein HscB homolog of Burkholderia cenocepacia (strain ATCC BAA-245 / DSM 16553 / LMG 16656 / NCTC 13227 / J2315 / CF5610) (Burkholderia cepacia (strain J2315)).